The chain runs to 464 residues: Argininosuccinate lyase (464 aa).

This sequence belongs to the lyase 1 family. Argininosuccinate lyase subfamily.

Its subcellular location is the cytoplasm. The enzyme catalyses 2-(N(omega)-L-arginino)succinate = fumarate + L-arginine. Its pathway is amino-acid biosynthesis; L-arginine biosynthesis; L-arginine from L-ornithine and carbamoyl phosphate: step 3/3. The polypeptide is Argininosuccinate lyase (Crocosphaera subtropica (strain ATCC 51142 / BH68) (Cyanothece sp. (strain ATCC 51142))).